Consider the following 404-residue polypeptide: Serine/threonine-protein phosphatase 2A regulatory subunit rsa-1 (404 aa).

As to quaternary structure, part of a complex consisting of a common heterodimeric core enzyme, composed of catalytic subunit let-92 and constant regulatory subunit paa-1, that associates with a variety of regulatory subunits which confer distinct properties to the holoenzyme. Interacts with rsa-2, spd-5 and tpxl-1.

The protein localises to the cytoplasm. It localises to the cytoskeleton. It is found in the microtubule organizing center. Its subcellular location is the centrosome. Functionally, regulatory subunit of phosphatase let-92 which recruits let-92/paa-1 complex to the centrosomes, thereby regulating microtubule outgrowth from centrosomes and mitotic spindle assembly ensuring the stability of kinetochore microtubules. The protein is Serine/threonine-protein phosphatase 2A regulatory subunit rsa-1 of Caenorhabditis elegans.